Consider the following 410-residue polypeptide: Protein BTN2 (410 aa).

Disordered stretches follow at residues 223 to 264 (INEP…TKED) and 276 to 410 (MQEE…IEEI). Composition is skewed to basic and acidic residues over residues 233–264 (SKID…TKED) and 276–311 (MQEE…KESL). A coiled-coil region spans residues 243 to 330 (NMSESLKEEE…QQKKLQNSKS (88 aa)). Low complexity predominate over residues 334 to 362 (SEIEASNKNNNSNSGSAESDNESINSDSD). Residues 364–373 (TLDFSVSGNT) show a composition bias toward polar residues.

In terms of assembly, interacts with RHB1, IST2, TDA3 and YIF1.

Its subcellular location is the cytoplasm. It is found in the late endosome. In terms of biological role, V-SNARE binding protein that facilitates specific protein retrieval from a late endosome to the Golgi. Modulates the rate of arginine uptake. Involved in pH homeostasis. Required for the correct localization of IST2. May be involved in ion homeostasis together with IST2. This chain is Protein BTN2 (BTN2), found in Saccharomyces cerevisiae (strain ATCC 204508 / S288c) (Baker's yeast).